The sequence spans 453 residues: UDP-N-acetylmuramoylalanine--D-glutamate ligase (453 aa).

An ATP-binding site is contributed by 117-123 (GANGKST).

The protein belongs to the MurCDEF family.

Its subcellular location is the cytoplasm. The catalysed reaction is UDP-N-acetyl-alpha-D-muramoyl-L-alanine + D-glutamate + ATP = UDP-N-acetyl-alpha-D-muramoyl-L-alanyl-D-glutamate + ADP + phosphate + H(+). The protein operates within cell wall biogenesis; peptidoglycan biosynthesis. Cell wall formation. Catalyzes the addition of glutamate to the nucleotide precursor UDP-N-acetylmuramoyl-L-alanine (UMA). The polypeptide is UDP-N-acetylmuramoylalanine--D-glutamate ligase (Methylobacillus flagellatus (strain ATCC 51484 / DSM 6875 / VKM B-1610 / KT)).